Consider the following 224-residue polypeptide: MIPPRSLGSTAALLLVLLFTTLASAIKFDLPSNAHPHTKCIWNYALSDSLVIVTASVVAKEPFDFSHQRVDIEVVDGSQHNNVYLSKKAIKGETRLAINTHSHADLGVCFKNTLTSKSGNQIPVVTIDLDVDIGADAVDYNAIANQESLSGLETEMRKLEAVANEIVNEMEYLKKRELRMADTNLSTNMRVTNFAILTLIALIALGVWQVFHLRGFFKRKYLID.

The signal sequence occupies residues 1–25 (MIPPRSLGSTAALLLVLLFTTLASA). Residues 26-190 (IKFDLPSNAH…ADTNLSTNMR (165 aa)) are Lumenal-facing. A GOLD domain is found at 38–131 (TKCIWNYALS…IPVVTIDLDV (94 aa)). The helical transmembrane segment at 191–211 (VTNFAILTLIALIALGVWQVF) threads the bilayer. The Cytoplasmic segment spans residues 212-224 (HLRGFFKRKYLID).

It belongs to the EMP24/GP25L family.

The protein resides in the endoplasmic reticulum membrane. Its subcellular location is the golgi apparatus membrane. Constituent of COPII-coated endoplasmic reticulum-derived transport vesicles. Required for efficient transport of a subset of secretory proteins to the Golgi. Facilitates retrograde transport from the Golgi to the endoplasmic reticulum. This chain is Endoplasmic reticulum vesicle protein 25 (ERV25), found in Mycosarcoma maydis (Corn smut fungus).